The chain runs to 208 residues: Proteasome subunit beta 2 (208 aa).

The propeptide at 1–9 (MSGKKIVSK) is removed in mature form; by autocatalysis. The Nucleophile role is filled by threonine 10.

This sequence belongs to the peptidase T1B family. As to quaternary structure, the 20S proteasome core is composed of 14 alpha and 14 beta subunits that assemble into four stacked heptameric rings, resulting in a barrel-shaped structure. The two inner rings, each composed of seven catalytic beta subunits, are sandwiched by two outer rings, each composed of seven alpha subunits. The catalytic chamber with the active sites is on the inside of the barrel. Has a gated structure, the ends of the cylinder being occluded by the N-termini of the alpha-subunits. Is capped at one or both ends by the proteasome regulatory ATPase, PAN.

It localises to the cytoplasm. It carries out the reaction Cleavage of peptide bonds with very broad specificity.. Its activity is regulated as follows. The formation of the proteasomal ATPase PAN-20S proteasome complex, via the docking of the C-termini of PAN into the intersubunit pockets in the alpha-rings, triggers opening of the gate for substrate entry. Interconversion between the open-gate and close-gate conformations leads to a dynamic regulation of the 20S proteasome proteolysis activity. Component of the proteasome core, a large protease complex with broad specificity involved in protein degradation. This chain is Proteasome subunit beta 2, found in Staphylothermus marinus (strain ATCC 43588 / DSM 3639 / JCM 9404 / F1).